The chain runs to 444 residues: Enolase 2 (444 aa).

The substrate site is built by histidine 165 and glutamate 174. Glutamate 217 serves as the catalytic Proton donor. Mg(2+) is bound by residues aspartate 252, glutamate 303, and aspartate 330. Substrate contacts are provided by glutamate 303 and aspartate 330. The Proton acceptor role is filled by lysine 355. Residues 382–385 (SHRS) and lysine 406 contribute to the substrate site.

Belongs to the enolase family. As to quaternary structure, homodimer. It depends on Mg(2+) as a cofactor.

It is found in the cytoplasm. It catalyses the reaction (2R)-2-phosphoglycerate = phosphoenolpyruvate + H2O. It functions in the pathway carbohydrate degradation; glycolysis; pyruvate from D-glyceraldehyde 3-phosphate: step 4/5. The polypeptide is Enolase 2 (ENO2) (Toxoplasma gondii).